A 459-amino-acid chain; its full sequence is Probable Delta(5) fatty acid desaturase C (459 aa).

Residues 9–87 (KKLYSWKEIS…LKQYEIGQVS (79 aa)) enclose the Cytochrome b5 heme-binding domain. The heme site is built by histidine 45 and histidine 68. Helical transmembrane passes span 121 to 141 (FAFG…TSYY) and 151 to 171 (FYLN…FSLH). The short motif at 174 to 178 (HDACH) is the Histidine box-1 element. The chain crosses the membrane as a helical span at residues 187–207 (VWKWLGATYDLFIGASFFYWC). Residues 210–215 (HVIGHH) carry the Histidine box-2 motif. Transmembrane regions (helical) follow at residues 289–309 (FEII…FIIP) and 315–335 (LVNL…YLSF). Positions 394–398 (QVVHH) match the Histidine box-3 motif.

Belongs to the fatty acid desaturase type 1 family. The cofactor is Fe cation.

The protein resides in the membrane. This is Probable Delta(5) fatty acid desaturase C from Dictyostelium discoideum (Social amoeba).